The following is a 472-amino-acid chain: Meiotic spindle formation protein mei-1 (472 aa).

Positions 83 to 161 are disordered; it reads HEAMTRQSGS…TQGILPQNSA (79 aa). Position 92 is a phosphoserine; by mbk-2 (S92). Polar residues-rich tracts occupy residues 134–143 and 150–161; these read KSTSSMSTNP and NPTQGILPQNSA. Residues 233-240 and 351-352 contribute to the ATP site; these read GPPGTGKT and RR.

Belongs to the AAA ATPase family. Katanin p60 subunit A1 subfamily. As to quaternary structure, homohexamer; ATP hydrolysis initiates a cycle between an open spiral and a closed ring conformation which is probably involved in pulling tubulin dimers out from microtubules. Interacts with mei-2, which may serve as a targeting subunit. Interacts with mel-26, which targets mei-1 for ubiquitin mediated proteolysis. Interacts with phosphatase pph-4.1. Phosphorylated. Phosphorylation by mbk-2 is required for its rapid degradation following meiosis II. Likely dephosphorylated by the PP4 complex composed of catalytic subunit pph-4.1 and regulatory subunit ppfr-1. Post-translationally, polyubiquitination targets the protein for rapid degradation via the ubiquitin system at the end of meiosis. The BTB domain protein mel-26 may serve to specifically target mei-1 for ubiquitination by cul-3 containing complexes. The cul-3 protein is in turn regulated by neddylation by ned-8.

The protein resides in the cytoplasm. It is found in the cytoskeleton. The protein localises to the spindle pole. It localises to the chromosome. It catalyses the reaction n ATP + n H2O + a microtubule = n ADP + n phosphate + (n+1) alpha/beta tubulin heterodimers.. With respect to regulation, ATPase activity is stimulated by microtubules, which promote homooligomerization. ATP-dependent microtubule severing is stimulated by interaction with mei-2. Its function is as follows. Catalytic subunit of a complex which severs microtubules in an ATP-dependent manner. Microtubule severing may promote rapid reorganization of cellular microtubule arrays. Required specifically for meiotic spindle formation in the female germline; the presence of this protein is inimical to the formation of mitotic spindles. In body wall muscles, regulates organization of myosin thick filaments. This Caenorhabditis elegans protein is Meiotic spindle formation protein mei-1.